The chain runs to 423 residues: Glucose-1-phosphate adenylyltransferase 1 (423 aa).

Residues Tyr111, Gly176, 191 to 192, and Ser209 contribute to the alpha-D-glucose 1-phosphate site; that span reads EK.

It belongs to the bacterial/plant glucose-1-phosphate adenylyltransferase family. Homotetramer.

It catalyses the reaction alpha-D-glucose 1-phosphate + ATP + H(+) = ADP-alpha-D-glucose + diphosphate. It participates in glycan biosynthesis; glycogen biosynthesis. In terms of biological role, involved in the biosynthesis of ADP-glucose, a building block required for the elongation reactions to produce glycogen. Catalyzes the reaction between ATP and alpha-D-glucose 1-phosphate (G1P) to produce pyrophosphate and ADP-Glc. This is Glucose-1-phosphate adenylyltransferase 1 from Alkalilimnicola ehrlichii (strain ATCC BAA-1101 / DSM 17681 / MLHE-1).